The sequence spans 224 residues: Probable GTP-binding protein EngB (224 aa).

The EngB-type G domain occupies 27-201; sequence SGIEVAFAGR…DAIICQWLEQ (175 aa). GTP is bound by residues 35–42, 62–66, 80–83, 147–150, and 180–182; these read GRSNAGKS, GRTQL, DLPG, TKCD, and FSS. Mg(2+) is bound by residues Ser-42 and Thr-64. The interval 205–224 is disordered; sequence EYELPEEDDFDDSDEFTEEE.

This sequence belongs to the TRAFAC class TrmE-Era-EngA-EngB-Septin-like GTPase superfamily. EngB GTPase family. Requires Mg(2+) as cofactor.

In terms of biological role, necessary for normal cell division and for the maintenance of normal septation. The chain is Probable GTP-binding protein EngB from Colwellia psychrerythraea (strain 34H / ATCC BAA-681) (Vibrio psychroerythus).